A 435-amino-acid polypeptide reads, in one-letter code: ATP-dependent RNA helicase RhlB (435 aa).

The short motif at 9–37 (QKFADLGLNPQVVEGLEKKGFEFCTPIQA) is the Q motif element. One can recognise a Helicase ATP-binding domain in the interval 40–219 (LPVLLSGQDI…FEHMHNPEHV (180 aa)). 53–60 (AQTGTGKT) is an ATP binding site. The short motif at 165-168 (DEAD) is the DEAD box element. Residues 245–390 (ALLQTLIEEE…VSDYDSSALI (146 aa)) enclose the Helicase C-terminal domain. The tract at residues 395-435 (APVRTPSARNQQRRTNTGGARSGDRKSNNRRPRQPRQHKEA) is disordered. The span at 401–413 (SARNQQRRTNTGG) shows a compositional bias: polar residues. Basic residues predominate over residues 422–435 (NNRRPRQPRQHKEA).

The protein belongs to the DEAD box helicase family. RhlB subfamily. As to quaternary structure, component of the RNA degradosome, which is a multiprotein complex involved in RNA processing and mRNA degradation.

It localises to the cytoplasm. It catalyses the reaction ATP + H2O = ADP + phosphate + H(+). Its function is as follows. DEAD-box RNA helicase involved in RNA degradation. Has RNA-dependent ATPase activity and unwinds double-stranded RNA. The polypeptide is ATP-dependent RNA helicase RhlB (Vibrio vulnificus (strain YJ016)).